A 244-amino-acid chain; its full sequence is MKVSLFITCVSDIVFADVGKHTVEILERVGCEVDFPAAQTCCGQPAYNSGYLQEAKKSMKQMIKAFKNSEYVVGPSGSCVGMLKEYPHIFKGDPDWEQPAIDLANKSYEITQFLVDVLGVTDLGSTFKGRVTYHPSCHMTRVLGVKDAPQKLLQSVKGIDFVELPVKEDCCGFGGTFSIKNPEISREMVKEKSQHVSETKAEYLVGGDMGCLMNIGGRMRREGKDVKVVHITEILNTHREGGIA.

This sequence belongs to the LutA/YkgE family.

Functionally, is involved in L-lactate degradation and allows cells to grow with lactate as the sole carbon source. The chain is Lactate utilization protein A from Oceanobacillus iheyensis (strain DSM 14371 / CIP 107618 / JCM 11309 / KCTC 3954 / HTE831).